The chain runs to 137 residues: Histone H2B (137 aa).

The span at Met1–Pro10 shows a compositional bias: basic and acidic residues. The segment at Met1–Lys45 is disordered. An N6-acetyllysine; alternate mark is found at Lys8 and Lys9. Glycyl lysine isopeptide (Lys-Gly) (interchain with G-Cter in SUMO); alternate cross-links involve residues Lys8 and Lys9. Residue Lys13 is modified to N6-acetyllysine. An N6-acetyllysine; alternate modification is found at Lys24. A Glycyl lysine isopeptide (Lys-Gly) (interchain with G-Cter in SUMO); alternate cross-link involves residue Lys24. Lys25 participates in a covalent cross-link: Glycyl lysine isopeptide (Lys-Gly) (interchain with G-Cter in SUMO). A Glycyl lysine isopeptide (Lys-Gly) (interchain with G-Cter in ubiquitin) cross-link involves residue Lys131.

Belongs to the histone H2B family. As to quaternary structure, the nucleosome is a histone octamer containing two molecules each of H2A, H2B, H3 and H4 assembled in one H3-H4 heterotetramer and two H2A-H2B heterodimers. The octamer wraps approximately 147 bp of DNA. In terms of processing, monoubiquitinated to form H2BK123ub1. H2BK123ub1 gives a specific tag for epigenetic transcriptional activation and is also prerequisite for H3K4me and H3K79me formation. H2BK123ub1 also modulates the formation of double-strand breaks during meiosis and is a prerequisite for DNA-damage checkpoint activation. Post-translationally, acetylated by GCN5 to form H2BK11ac and H2BK16ac. H2BK16ac can also be formed by ESA1. Acetylation of N-terminal lysines and particularly formation of H2BK11acK16ac has a positive effect on transcription. Sumoylation to form H2BK6su or H2BK7su, and probably also H2BK16su or H2BK17su, occurs preferentially near the telomeres and represses gene transcription.

It is found in the nucleus. It localises to the chromosome. Functionally, core component of nucleosome. Nucleosomes wrap and compact DNA into chromatin, limiting DNA accessibility to the cellular machineries which require DNA as a template. Histones thereby play a central role in transcription regulation, DNA repair, DNA replication and chromosomal stability. DNA accessibility is regulated via a complex set of post-translational modifications of histones, also called histone code, and nucleosome remodeling. In Podospora anserina (Pleurage anserina), this protein is Histone H2B (HTB1).